An 831-amino-acid chain; its full sequence is Probable glucan 1,3-beta-glucosidase D (831 aa).

Basic and acidic residues-rich tracts occupy residues 1–24 (MPSH…YREV), 44–56 (RRDD…RSHE), 79–93 (RSHD…RSRA), 102–115 (SRRD…EYRR), 137–151 (RDGQ…DREA), and 198–213 (QRER…LESK). Disordered stretches follow at residues 1–179 (MPSH…SGSH) and 192–241 (HYDE…GQSK). The Cytoplasmic portion of the chain corresponds to 1 to 297 (MPSHSRSRDR…AQPPFWKRKK (297 aa)). The helical; Signal-anchor for type II membrane protein transmembrane segment at 298 to 318 (WWIVIGVLVVVLAIVIPVAVV) threads the bilayer. At 319 to 831 (MSKKHGHDDD…PSFGDLPEYY (513 aa)) the chain is on the extracellular side. N-linked (GlcNAc...) asparagine glycans are attached at residues asparagine 376, asparagine 381, asparagine 393, asparagine 410, asparagine 442, asparagine 546, and asparagine 558. Glutamate 597 acts as the Proton donor in catalysis. N-linked (GlcNAc...) asparagine glycosylation is found at asparagine 610, asparagine 636, asparagine 669, and asparagine 689. Glutamate 702 acts as the Nucleophile in catalysis.

It belongs to the glycosyl hydrolase 5 (cellulase A) family.

Its subcellular location is the cell membrane. It carries out the reaction Successive hydrolysis of beta-D-glucose units from the non-reducing ends of (1-&gt;3)-beta-D-glucans, releasing alpha-glucose.. Glucosidase involved in the degradation of cellulosic biomass. Active on lichenan. The chain is Probable glucan 1,3-beta-glucosidase D (exgD) from Aspergillus flavus (strain ATCC 200026 / FGSC A1120 / IAM 13836 / NRRL 3357 / JCM 12722 / SRRC 167).